Consider the following 502-residue polypeptide: Cytochrome P450 monooxygenase verC (502 aa).

The chain crosses the membrane as a helical span at residues Ile-9–Gly-29. Asn-124, Asn-190, Asn-271, and Asn-342 each carry an N-linked (GlcNAc...) asparagine glycan. Cys-444 contributes to the heme binding site.

This sequence belongs to the cytochrome P450 family. The cofactor is heme.

It is found in the membrane. Its pathway is mycotoxin biosynthesis. Its function is as follows. Cytochrome P450 monooxygenase; part of the gene cluster that mediates the biosynthesis of 11'-deoxyverticillin A, one of the dimeric epipolythiodioxopiperazines (ETPs) from the verticillin family that act as mycotoxins. 11'-deoxyverticillin A is required for normal conidiation. The nonribosomal peptide synthetase verP is speculated to be responsible for condensation of amino acids to form the carbon skeleton of verticillin, whereas the cluster-specific tailoring enzymes are involved in further modifications leading to the production of 11'-deoxyverticillin A. The polypeptide is Cytochrome P450 monooxygenase verC (Clonostachys rogersoniana).